The primary structure comprises 37 residues: MKIRASVRKICENCRLIRRRRRVMVVCSNPKHKQKQG.

Belongs to the bacterial ribosomal protein bL36 family.

It is found in the plastid. The protein resides in the chloroplast. The sequence is that of Large ribosomal subunit protein bL36c (rpl36) from Anthoceros angustus (Hornwort).